A 142-amino-acid polypeptide reads, in one-letter code: General odorant-binding protein 99a (142 aa).

The signal sequence occupies residues 1–16 (MKVFVAICVLIGLASA). 3 disulfides stabilise this stretch: Cys-33–Cys-64, Cys-60–Cys-116, and Cys-105–Cys-125.

This sequence belongs to the PBP/GOBP family. In terms of tissue distribution, expressed in larval chemosensory organ. Specifically expressed exclusively in a subset of chemosensory sensilla on the third antennal segment.

The protein resides in the secreted. Functionally, present in the aqueous fluid surrounding olfactory sensory dendrites and are thought to aid in the capture and transport of hydrophobic odorants into and through this fluid. This chain is General odorant-binding protein 99a (Obp99a), found in Drosophila melanogaster (Fruit fly).